The sequence spans 430 residues: MELSIIGSGYVGTTIAACFAELGHDVVNVDIDEDIVASLNDGQAPIHEPGLAELVERYAGDRLRATTDYDEILDTDATFLALPTPSTDDGSIDLGAMKTAATSLGETLARKDDSHLVVTKSTVVPRTTVDVIGPRIEEASGKRVGDGLDIAMNPEFLREGTAVDDFLSPDKIVLGAQTDRAYETLAEIFAPLVERAGNPPVVKTGISEAEMIKYANNAFLASKISLANDLANICKVFGVDSAEVLESIGLDSRIGSAFLGAGLGWGGSCFPKDTAAIIAAARAQGYEPRLLQAAVDVNDGQPERMLDLLRERFDLDGKRVAVLGLAFKPGTDDIRKSRAILLIQALLDAGADVVGYDPVATENMRERFPDIDYADSAADALANADAALVATDWDEFAALDDEFDAMRERIVIDGRRIVTRREGLDYESLV.

The active site involves cysteine 269.

Belongs to the UDP-glucose/GDP-mannose dehydrogenase family.

It catalyses the reaction UDP-alpha-D-glucose + 2 NAD(+) + H2O = UDP-alpha-D-glucuronate + 2 NADH + 3 H(+). It functions in the pathway nucleotide-sugar biosynthesis; UDP-alpha-D-glucuronate biosynthesis; UDP-alpha-D-glucuronate from UDP-alpha-D-glucose: step 1/1. The protein operates within cell surface structure biogenesis; S-layer biogenesis. With respect to regulation, activity improves as salinity decreases. In terms of biological role, involved in the assembly of a N-linked pentasaccharide that decorates the S-layer glycoprotein and flagellins. Involved in the biosynthesis of the hexuronic acids found at both positions 2 and 3 of the pentasaccharide. The sequence is that of UDP-glucose 6-dehydrogenase AglM (aglM) from Haloferax volcanii (strain ATCC 29605 / DSM 3757 / JCM 8879 / NBRC 14742 / NCIMB 2012 / VKM B-1768 / DS2) (Halobacterium volcanii).